Here is a 241-residue protein sequence, read N- to C-terminus: MLTTLLPLLPLLLPGWALCSQEASDGPWDLHMTQVSYFRNPSQVWHRGNATLGGVLTHVLEGPGRNVSIQQLQPLQEPDSWALTKIYLNRYLEEFVGLVQVVHQERGVTFPLIIRCFLGCELPPEGSEARVFFEVAVNGSSFVNFQPKTASWVAEPHAPSRVVTYTVDQLNKYNRTRYELREFLQDTCVQYIQKHITTNNLKGSQTGRSYTSLVLGVLVGCFIVTGVAVGIFLCTGGRRRC.

A signal peptide spans 1–17 (MLTTLLPLLPLLLPGWA). The Extracellular portion of the chain corresponds to 18–212 (LCSQEASDGP…GSQTGRSYTS (195 aa)). N-linked (GlcNAc...) asparagine glycans are attached at residues Asn49, Asn66, Asn138, and Asn174. Cystine bridges form between Cys120–Cys188 and Cys221–Cys234. The chain crosses the membrane as a helical span at residues 213-233 (LVLGVLVGCFIVTGVAVGIFL). The Cytoplasmic portion of the chain corresponds to 234-241 (CTGGRRRC).

Expressed in endothelial cells.

It is found in the membrane. In terms of biological role, binds activated protein C. Enhances protein C activation by the thrombin-thrombomodulin complex; plays a role in the protein C pathway controlling blood coagulation. The polypeptide is Endothelial protein C receptor (PROCR) (Bos taurus (Bovine)).